The following is a 468-amino-acid chain: Chromatin assembly factor 1 subunit B (468 aa).

WD repeat units follow at residues 11-52 (HDSQ…NGQN), 69-108 (HHEQ…TQQE), 143-182 (TAAA…LVCG), 185-224 (DHGH…AGVV), and 371-413 (IHYS…SRIE).

This sequence belongs to the WD repeat HIR1 family. Component of chromatin assembly factor 1 (CAF-1), composed of MSI1/p50, CAC2/p60 and CAC1/p90. Interacts with RTT106.

It localises to the nucleus. Acts as a component of the histone chaperone complex chromatin assembly factor 1 (CAF-1), which assembles histone octamers onto replicating DNA. It performs the first step of the nucleosome assembly process, bringing newly synthesized histones H3 and H4 to replicating DNA; histones H2A/H2B can bind to this chromatin precursor subsequent to DNA replication to complete the histone octamer. Plays a role in the maintenance of heterochromatin. This is Chromatin assembly factor 1 subunit B (CAC2) from Saccharomyces cerevisiae (strain ATCC 204508 / S288c) (Baker's yeast).